The primary structure comprises 684 residues: Histone-lysine N-methyltransferase SETMAR (684 aa).

A histone-lysine N-methyltransferase region spans residues 1–345 (MFAEAAKTTR…RLTLETMKMM (345 aa)). In terms of domain architecture, Pre-SET spans 73–136 (PGCICVKTPC…HCRNRVVQKG (64 aa)). The Zn(2+) site is built by Cys75, Cys77, Cys82, Cys87, Cys89, Cys118, Cys122, Cys124, and Cys128. The SET domain maps to 139–263 (FHFQVFKTHK…PEEELSYDYS (125 aa)). Residues 149 to 151 (KGW), Tyr192, Arg220, and 223 to 224 (NH) each bind S-adenosyl-L-methionine. Zn(2+) contacts are provided by Cys226, Cys287, Cys289, and Cys294. The 17-residue stretch at 283-299 (LRKPCYCGAKSCTAFLP) folds into the Post-SET domain. The tract at residues 346 to 684 (LDKKQIRAIF…CVDCNGSYFD (339 aa)) is mariner transposase Hsmar1. DNA-binding regions (H-T-H motif) lie at residues 364 to 395 (KAAE…KFCK) and 428 to 448 (TTRE…RHLK). A Mg(2+)-binding site is contributed by Asp496. Lys498 carries the post-translational modification N6-methyllysine. Ser508 carries the post-translational modification Phosphoserine; by CHEK1. Asp588 lines the Mg(2+) pocket.

It in the N-terminal section; belongs to the class V-like SAM-binding methyltransferase superfamily. The protein in the C-terminal section; belongs to the mariner transposase family. Homodimer. Interacts with PRPF19; required for SETMAR recruitment to damaged DNA sites. Interacts with PCNA. Interacts with TOP2A; stimulates TOP2A topoisomerase activity. May interact with RAD9A and/or RAD9B. Requires Mg(2+) as cofactor. Post-translationally, methylated. Methylation regulates activity in DNA decatenation. Phosphorylated at Ser-508 by CHEK1 and dephosphorylated by protein phosphatase 2A/PP2A. Phosphorylation at Ser-508 is enhanced by DNA damage and promotes recruitment to damaged DNA. It stimulates DNA repair and impairs replication fork restart. In terms of tissue distribution, widely expressed, with highest expression in placenta and ovary and lowest expression in skeletal muscle.

The protein localises to the nucleus. It is found in the chromosome. It catalyses the reaction L-lysyl(36)-[histone H3] + 2 S-adenosyl-L-methionine = N(6),N(6)-dimethyl-L-lysyl(36)-[histone H3] + 2 S-adenosyl-L-homocysteine + 2 H(+). In terms of biological role, protein derived from the fusion of a methylase with the transposase of an Hsmar1 transposon that plays a role in DNA double-strand break repair, stalled replication fork restart and DNA integration. DNA-binding protein, it is indirectly recruited to sites of DNA damage through protein-protein interactions. Also has kept a sequence-specific DNA-binding activity recognizing the 19-mer core of the 5'-terminal inverted repeats (TIRs) of the Hsmar1 element and displays a DNA nicking and end joining activity. In parallel, has a histone methyltransferase activity and methylates 'Lys-4' and 'Lys-36' of histone H3. Specifically mediates dimethylation of H3 'Lys-36' at sites of DNA double-strand break and may recruit proteins required for efficient DSB repair through non-homologous end-joining. Also regulates replication fork processing, promoting replication fork restart and regulating DNA decatenation through stimulation of the topoisomerase activity of TOP2A. This Homo sapiens (Human) protein is Histone-lysine N-methyltransferase SETMAR.